Consider the following 945-residue polypeptide: Isoleucine--tRNA ligase (945 aa).

The 'HIGH' region signature appears at 66-76 (PYANGDIHLGH). An L-isoleucyl-5'-AMP-binding site is contributed by E581. The 'KMSKS' region signature appears at 622–626 (KMSKS). K625 is a binding site for ATP. Positions 908, 911, 928, and 931 each coordinate Zn(2+).

It belongs to the class-I aminoacyl-tRNA synthetase family. IleS type 1 subfamily. Monomer. The cofactor is Zn(2+).

Its subcellular location is the cytoplasm. The catalysed reaction is tRNA(Ile) + L-isoleucine + ATP = L-isoleucyl-tRNA(Ile) + AMP + diphosphate. In terms of biological role, catalyzes the attachment of isoleucine to tRNA(Ile). As IleRS can inadvertently accommodate and process structurally similar amino acids such as valine, to avoid such errors it has two additional distinct tRNA(Ile)-dependent editing activities. One activity is designated as 'pretransfer' editing and involves the hydrolysis of activated Val-AMP. The other activity is designated 'posttransfer' editing and involves deacylation of mischarged Val-tRNA(Ile). The chain is Isoleucine--tRNA ligase from Burkholderia lata (strain ATCC 17760 / DSM 23089 / LMG 22485 / NCIMB 9086 / R18194 / 383).